We begin with the raw amino-acid sequence, 341 residues long: Phosphoribosylformylglycinamidine cyclo-ligase (341 aa).

Belongs to the AIR synthase family.

Its subcellular location is the cytoplasm. It catalyses the reaction 2-formamido-N(1)-(5-O-phospho-beta-D-ribosyl)acetamidine + ATP = 5-amino-1-(5-phospho-beta-D-ribosyl)imidazole + ADP + phosphate + H(+). The protein operates within purine metabolism; IMP biosynthesis via de novo pathway; 5-amino-1-(5-phospho-D-ribosyl)imidazole from N(2)-formyl-N(1)-(5-phospho-D-ribosyl)glycinamide: step 2/2. The protein is Phosphoribosylformylglycinamidine cyclo-ligase of Alkaliphilus oremlandii (strain OhILAs) (Clostridium oremlandii (strain OhILAs)).